Consider the following 375-residue polypeptide: POU domain, class 3, transcription factor 1-B (375 aa).

Disordered stretches follow at residues 1–29 (MAAT…RMHQ), 56–139 (MSLT…QPLI), and 151–200 (MLGP…PSSD). Polar residues-rich tracts occupy residues 107–117 (VHQQTPSSHAW), 129–139 (SPGSNSHQPLI), and 151–160 (MLGPQASSLH). The segment covering 162–178 (SMRDPLHDDPGVHDTHV) has biased composition (basic and acidic residues). Positions 194-268 (EDAPSSDDLE…LLNKWLEETD (75 aa)) constitute a POU-specific domain. Residues 286 to 345 (KRKKRTSIEVGVKGALENHFLKCPKPSAHEITSLADSLQLEKEVVRVWFCNRRQKEKRMT) constitute a DNA-binding region (homeobox).

The protein belongs to the POU transcription factor family. Class-3 subfamily.

It localises to the nucleus. Functionally, acts as a transcription factor. May play a role in neuronal differentiation. This Xenopus laevis (African clawed frog) protein is POU domain, class 3, transcription factor 1-B (pou3f1-b).